We begin with the raw amino-acid sequence, 105 residues long: uncharacterized protein (105 aa).

2 disordered regions span residues 29–55 and 72–105; these read HTRV…TDES and EQRG…RSGR. Basic and acidic residues predominate over residues 72–81; it reads EQRGDRRAVR.

This is an uncharacterized protein from Streptomyces coelicolor (strain ATCC BAA-471 / A3(2) / M145).